A 355-amino-acid chain; its full sequence is RNA 3'-terminal phosphate cyclase (355 aa).

ATP is bound by residues Gln109 and 291-295 (HLADQ). The Tele-AMP-histidine intermediate role is filled by His316.

This sequence belongs to the RNA 3'-terminal cyclase family. Type 1 subfamily.

The protein resides in the cytoplasm. It carries out the reaction a 3'-end 3'-phospho-ribonucleotide-RNA + ATP = a 3'-end 2',3'-cyclophospho-ribonucleotide-RNA + AMP + diphosphate. Catalyzes the conversion of 3'-phosphate to a 2',3'-cyclic phosphodiester at the end of RNA. The mechanism of action of the enzyme occurs in 3 steps: (A) adenylation of the enzyme by ATP; (B) transfer of adenylate to an RNA-N3'P to produce RNA-N3'PP5'A; (C) and attack of the adjacent 2'-hydroxyl on the 3'-phosphorus in the diester linkage to produce the cyclic end product. The biological role of this enzyme is unknown but it is likely to function in some aspects of cellular RNA processing. This is RNA 3'-terminal phosphate cyclase from Koribacter versatilis (strain Ellin345).